The sequence spans 238 residues: Small ribosomal subunit protein uS2 (238 aa).

This sequence belongs to the universal ribosomal protein uS2 family.

This chain is Small ribosomal subunit protein uS2, found in Chloroflexus aggregans (strain MD-66 / DSM 9485).